The primary structure comprises 498 residues: L-amino acid oxidase (498 aa).

A signal peptide spans 1-11; the sequence is SLLFLAAVGSC. Cys-21 and Cys-184 are disulfide-bonded. Residues 54–55, 74–75, 74–78, Arg-82, and 98–101 contribute to the FAD site; these read MS, EA, EASER, and GPMR. Position 101 (Arg-101) interacts with substrate. Asn-183 carries an N-linked (GlcNAc...) asparagine glycan. His-234 contributes to the substrate binding site. Val-272 provides a ligand contact to FAD. The cysteines at positions 342 and 423 are disulfide-linked. Residue Tyr-383 coordinates substrate. Residues Glu-468, 475-480, and 476-480 contribute to the FAD site; these read GWIDST and WIDST. 475-476 is a binding site for substrate; the sequence is GW.

Belongs to the flavin monoamine oxidase family. FIG1 subfamily. Homodimer; non-covalently linked. The cofactor is FAD. N-glycosylated. Contains 18.73% carbohydrates. In terms of tissue distribution, expressed by the venom gland.

It is found in the secreted. The catalysed reaction is an L-alpha-amino acid + O2 + H2O = a 2-oxocarboxylate + H2O2 + NH4(+). The enzyme catalyses L-leucine + O2 + H2O = 4-methyl-2-oxopentanoate + H2O2 + NH4(+). With respect to regulation, strongly inhibited by glutathione, and moderately inhibited by PMSF, acetate iodine and glutamic acid. Is also inhibited by Zn(2+) ions, but not by Ca(2+), Mg(2+) and Mn(2+). Its function is as follows. Catalyzes an oxidative deamination of predominantly hydrophobic and aromatic L-amino acids, thus producing hydrogen peroxide that may contribute to the diverse toxic effects of this enzyme. This enzyme shows activity on L-Leu. This enzyme inhibits platelet aggregation in human platelet rich plasma induced by ADP (IC(50)=3.2 mg/mL), and shows antibacterial activities on both Gram-positive and Gram-negative bacteria (P.aeruginosa, V.cholerae, S.aureus, E.faecalis and E.coli). These two effects are due to hydrogen peroxide, since they are inhibited by catalase. It also induces edema in mouse paw pads but does not show hemolytic activity. This protein may also have activities in hemorrhage, and apoptosis. This Bothrops pictus (Desert lancehead) protein is L-amino acid oxidase.